We begin with the raw amino-acid sequence, 353 residues long: Envelope glycoprotein M (353 aa).

Over 1 to 27 the chain is Intravirion; that stretch reads MAKAGVMTLSHVDRMNLRTWTMAIACC. Residues 28 to 48 traverse the membrane as a helical segment; that stretch reads LLSFVNIVVFSVAAHFPGIGF. The Virion surface portion of the chain corresponds to 49–82; the sequence is PCYYPRIIDFDNMNLTMYNAIHHLTPQLFLDPVQ. A helical transmembrane segment spans residues 83–103; that stretch reads LIVYVIFTELIFFCVLSYYIV. Topologically, residues 104–132 are intravirion; the sequence is CWVQIYFRSEHGTQVNQSTRDINFMGDSA. Residues 133–153 form a helical membrane-spanning segment; it reads TCFTFVLTMDTFQIFLLSLSF. Residues 154 to 157 are Virion surface-facing; it reads RLPS. The chain crosses the membrane as a helical span at residues 158–178; sequence MVAFSKCMYFMCLTAFVVTLV. At 179-210 the chain is on the intravirion side; sequence THYESRERSAFALSKIHPKLQGTIRYRTAVVN. The helical transmembrane segment at 211-231 threads the bilayer; sequence LTQLILGFATMVLAMSLALGF. At 232-240 the chain is on the virion surface side; the sequence is GNSFFVKTA. A helical transmembrane segment spans residues 241-261; that stretch reads HVVFGAMVAFAIVACVYFSII. Over 262–270 the chain is Intravirion; the sequence is ESVLSRYMK. A helical membrane pass occupies residues 271–291; sequence VQFGYHIGTILGVCGAMYPII. Residues 292 to 304 are Virion surface-facing; the sequence is RYEALNASSYARD. A helical transmembrane segment spans residues 305–325; it reads INIGITVLLLLCVAFSVIRTV. Topologically, residues 326–353 are intravirion; the sequence is RFLLRRNKRYRALALDNEEIRALRSDAE.

This sequence belongs to the herpesviridae glycoprotein M family. Interacts (via N-terminus) with gN (via N-terminus). The gM-gN heterodimer forms the gCII complex.

The protein resides in the virion membrane. Its subcellular location is the host Golgi apparatus. It is found in the host trans-Golgi network. The protein localises to the host endosome membrane. It localises to the host nucleus inner membrane. Its function is as follows. Envelope glycoprotein important for virion assembly and egress. Plays a role in the correct incorporation of gH-gL into virion membrane. Directs the glycoprotein N (gN) to the host trans-Golgi network. The polypeptide is Envelope glycoprotein M (Mus musculus (Mouse)).